We begin with the raw amino-acid sequence, 530 residues long: Sugar transport protein MST6 (530 aa).

Residues 1–18 are Cytoplasmic-facing; sequence MAGGVVVNNGGGKDYPGK. The chain crosses the membrane as a helical span at residues 19–39; it reads LTMFVLFACIVAATGGLIFGY. At 40 to 81 the chain is on the extracellular side; sequence DIGISGGVTSMNPFLIKFFPSVYRKEQAAEKNQSNQYCKFDS. The helical transmembrane segment at 82–102 threads the bilayer; that stretch reads PLLTMFTSSLYLAALVASFFA. Over 103–119 the chain is Cytoplasmic; the sequence is STVTRVAGRKWSMFGGG. A helical transmembrane segment spans residues 120–140; that stretch reads VTFLVGAALNGAAKNVLMLIL. Over 141 to 142 the chain is Extracellular; sequence GR. A helical transmembrane segment spans residues 143-163; the sequence is VLLGVGVGFANQSVPLYLSEM. At 164-169 the chain is on the cytoplasmic side; sequence APARLR. A helical transmembrane segment spans residues 170-190; it reads GMLNIGFQLMITIGILCANLI. Residues 191 to 204 lie on the Extracellular side of the membrane; the sequence is NYGTAKIKGGWGWR. The chain crosses the membrane as a helical span at residues 205 to 225; it reads VSLALAAVPAAIIAVGALFLP. The Cytoplasmic segment spans residues 226-291; the sequence is DTPNSLIDRG…YRPQLTMAIA (66 aa). A helical transmembrane segment spans residues 292–312; that stretch reads IPLFQQLTGINVIMFYAPVLF. The Extracellular segment spans residues 313-323; it reads KTLGFADDASL. Residues 324 to 344 traverse the membrane as a helical segment; it reads MSAVITGLVNVFATFVSIVTV. Over 345–359 the chain is Cytoplasmic; sequence DRLGRRKLFLQGGTQ. The helical transmembrane segment at 360–380 threads the bilayer; the sequence is MLACQIVVGSLIGAKFGFSGV. The Extracellular segment spans residues 381-388; it reads ADIPKAYA. A helical membrane pass occupies residues 389-409; that stretch reads AFVVLFICAYVAGFAWSWGPL. At 410–428 the chain is on the cytoplasmic side; it reads GWLVPSEIFPLEIRSAGQS. The chain crosses the membrane as a helical span at residues 429-449; it reads INVSVNMLFTFIIAQAFLPML. The Extracellular segment spans residues 450-453; sequence CRFK. A helical membrane pass occupies residues 454 to 474; that stretch reads FILFFFFGAWVVIMTLFVAFF. Residues 475–530 lie on the Cytoplasmic side of the membrane; it reads LPETKNVPIEEMVLVWKSHWYWGRFIRDEDVHVGADVEMPAAGNRNGKVDPAKLAN.

It belongs to the major facilitator superfamily. Sugar transporter (TC 2.A.1.1) family. As to expression, expressed in leaf blades, leaf sheaths, anthers, ovaries and embryos. Expressed at low levels in roots and shoots.

The protein resides in the cell membrane. In terms of biological role, mediates active uptake of hexoses by sugar:proton symport. Can transport glucose, fructose, mannose, galactose, xylose and ribose. This is Sugar transport protein MST6 from Oryza sativa subsp. japonica (Rice).